The sequence spans 303 residues: UDP-N-acetylenolpyruvoylglucosamine reductase (303 aa).

In terms of domain architecture, FAD-binding PCMH-type spans 27-191 (VGGPAARLYK…ISAKLQLTPG (165 aa)). Arg171 is a catalytic residue. Ser220 (proton donor) is an active-site residue. The active site involves Glu291.

Belongs to the MurB family. FAD serves as cofactor.

It is found in the cytoplasm. The enzyme catalyses UDP-N-acetyl-alpha-D-muramate + NADP(+) = UDP-N-acetyl-3-O-(1-carboxyvinyl)-alpha-D-glucosamine + NADPH + H(+). Its pathway is cell wall biogenesis; peptidoglycan biosynthesis. Cell wall formation. This is UDP-N-acetylenolpyruvoylglucosamine reductase from Legionella pneumophila (strain Paris).